Here is a 113-residue protein sequence, read N- to C-terminus: Large ribosomal subunit protein bL17 (113 aa).

Belongs to the bacterial ribosomal protein bL17 family. As to quaternary structure, part of the 50S ribosomal subunit. Contacts protein L32.

This chain is Large ribosomal subunit protein bL17, found in Caldicellulosiruptor saccharolyticus (strain ATCC 43494 / DSM 8903 / Tp8T 6331).